Reading from the N-terminus, the 371-residue chain is 43 kDa relaxation protein (371 aa).

5 disordered regions span residues Met-1–Pro-46, Lys-150–Thr-172, Arg-196–Gln-221, Ser-263–Glu-291, and Ile-328–Arg-371. Residues Tyr-22–Ser-42 show a composition bias toward basic and acidic residues. Over residues Gln-157 to Asn-168 the composition is skewed to basic residues. Residues Arg-196 to Leu-215 show a composition bias toward basic and acidic residues. A compositionally biased stretch (basic and acidic residues) spans Gln-330 to Lys-365.

It belongs to the MobA/MobL family.

In terms of biological role, this protein is probably required for relaxation complex formation. This is 43 kDa relaxation protein from Salmonella typhimurium.